We begin with the raw amino-acid sequence, 236 residues long: Cytochrome c biogenesis ATP-binding export protein CcmA (236 aa).

Residues Leu-14–Glu-235 form the ABC transporter domain. Gly-46–Thr-53 contacts ATP.

Belongs to the ABC transporter superfamily. CcmA exporter (TC 3.A.1.107) family. The complex is composed of two ATP-binding proteins (CcmA) and two transmembrane proteins (CcmB).

It is found in the cell inner membrane. It carries out the reaction heme b(in) + ATP + H2O = heme b(out) + ADP + phosphate + H(+). Part of the ABC transporter complex CcmAB involved in the biogenesis of c-type cytochromes; once thought to export heme, this seems not to be the case, but its exact role is uncertain. Responsible for energy coupling to the transport system. The polypeptide is Cytochrome c biogenesis ATP-binding export protein CcmA (Alkalilimnicola ehrlichii (strain ATCC BAA-1101 / DSM 17681 / MLHE-1)).